Consider the following 756-residue polypeptide: Xylosyl- and glucuronyltransferase LARGE1 (756 aa).

Topologically, residues 1–10 (MLGICRGRRK) are cytoplasmic. The helical; Signal-anchor for type II membrane protein transmembrane segment at 11-31 (FLAASLTVLFVPAVTWIYLFA) threads the bilayer. The Lumenal segment spans residues 32–756 (GSFEDGKPVS…LKYLTAENNS (725 aa)). Disordered stretches follow at residues 42–63 (LSPL…RDRE) and 81–109 (KQLS…EGTG). Residues 44–58 (PLESQPHSPRYTASS) are compositionally biased toward polar residues. A coiled-coil region spans residues 55-90 (TASSQRDRESLEVRMREVEEENRVLRKQLSLAQGRS). Asn-97, Asn-122, and Asn-148 each carry an N-linked (GlcNAc...) asparagine glycan. The segment at 138–413 (IHVAIVCAGY…FLEYDGNLLR (276 aa)) is xylosyltransferase activity. Residues Asp-242 and Asp-244 each coordinate Mn(2+). Residue Asn-272 is glycosylated (N-linked (GlcNAc...) asparagine). Residues 414–756 (RELFGCPSEA…LKYLTAENNS (343 aa)) form a glucuronyltransferase activity region. Residues Asp-563 and Asp-565 each coordinate Mn(2+).

It in the C-terminal section; belongs to the glycosyltransferase 49 family. The protein in the N-terminal section; belongs to the glycosyltransferase 8 family. It depends on Mn(2+) as a cofactor.

The protein localises to the golgi apparatus membrane. The enzyme catalyses 3-O-[beta-D-GlcA-(1-&gt;3)-beta-D-Xyl-(1-&gt;4)-Rib-ol-P-Rib-ol-P-3-beta-D-GalNAc-(1-&gt;3)-beta-D-GlcNAc-(1-&gt;4)-(O-6-P-alpha-D-Man)]-Thr-[protein] + UDP-alpha-D-xylose = 3-O-[alpha-D-Xyl-(1-&gt;3)-beta-D-GlcA-(1-&gt;4)-beta-D-Xyl-(1-&gt;4)-Rib-ol-P-Rib-ol-P-3-beta-D-GalNAc-(1-&gt;3)-beta-D-GlcNAc-(1-&gt;4)-(O-6-P-alpha-D-Man)]-Thr-[protein] + UDP + H(+). The catalysed reaction is 3-O-{(1-&gt;[3)-alpha-D-Xyl-(1-&gt;3)-beta-D-GlcA-(1-&gt;](n)-4)-beta-D-Xyl-(1-&gt;4)-Rib-ol-P-Rib-ol-P-3-beta-D-GalNAc-(1-&gt;3)-beta-D-GlcNAc-(1-&gt;4)-O-6-P-alpha-D-Man}-L-Thr-[protein] + UDP-alpha-D-glucuronate = 3-O-{beta-D-GlcA-(1-&gt;[3)-alpha-D-Xyl-(1-&gt;3)-beta-D-GlcA-(1-&gt;](n)-4)-beta-D-Xyl-(1-&gt;4)-Rib-ol-P-Rib-ol-P-3-beta-D-GalNAc-(1-&gt;3)-beta-D-GlcNAc-(1-&gt;4)-O-6-P-alpha-D-Man}-L-Thr-[protein] + UDP + H(+). It carries out the reaction 3-O-{beta-D-GlcA-(1-&gt;[3)-alpha-D-Xyl-(1-&gt;3)-beta-D-GlcA-(1-&gt;](n)-4)-beta-D-Xyl-(1-&gt;4)-Rib-ol-P-Rib-ol-P-3-beta-D-GalNAc-(1-&gt;3)-beta-D-GlcNAc-(1-&gt;4)-O-6-P-alpha-D-Man}-L-Thr-[protein] + UDP-alpha-D-xylose = 3-O-{(1-&gt;[3)-alpha-D-Xyl-(1-&gt;3)-beta-D-GlcA-(1-&gt;](n+1)-4)-beta-D-Xyl-(1-&gt;4)-Rib-ol-P-Rib-ol-P-3-beta-D-GalNAc-(1-&gt;3)-beta-D-GlcNAc-(1-&gt;4)-O-6-P-alpha-D-Man}-L-Thr-[protein] + UDP + H(+). It functions in the pathway protein modification; protein glycosylation. Its function is as follows. Bifunctional glycosyltransferase with both alpha-1,3-xylosyltransferase and beta-1,3-glucuronyltransferase activities involved in the maturation of alpha-dystroglycan (DAG1) by glycosylation leading to DAG1 binding to laminin G-like domain-containing extracellular proteins with high affinity. Elongates the glucuronyl-beta-1,4-xylose-beta disaccharide primer structure initiated by B4GAT1 by adding repeating units [-3-Xylose-alpha-1,3-GlcA-beta-1-] to produce a heteropolysaccharide. Requires the phosphorylation of core M3 (O-mannosyl trisaccharide) by POMK to elongate the glucuronyl-beta-1,4-xylose-beta disaccharide primer. Plays a key role in skeletal muscle function and regeneration. The chain is Xylosyl- and glucuronyltransferase LARGE1 from Gallus gallus (Chicken).